Consider the following 370-residue polypeptide: D-aspartate oxidase (370 aa).

8 residues coordinate FAD: I15, A49, S50, G54, V166, R317, G346, and Q348. The Microbody targeting signal signature appears at 368–370 (ARL).

Belongs to the DAMOX/DASOX family. In terms of assembly, homotetramer. It depends on FAD as a cofactor.

It localises to the peroxisome matrix. It catalyses the reaction D-aspartate + O2 + H2O = oxaloacetate + H2O2 + NH4(+). The catalysed reaction is D-glutamate + O2 + H2O = H2O2 + 2-oxoglutarate + NH4(+). Inhibited by malonate and D-malate. Very mildly inhibited by benzoate, ethylenediaminetetraacetic acid (EDTA), crotonate and anthranilate. May be very mildly inhibited by meso-tartrate. Functionally, selectively catalyzes the oxidative deamination of acidic amino acids. Protects the organism from the toxicity of D-amino acids. Enables the organism to utilize D-amino acids as a source of nutrients. Enables the organism to utilize D-aspartate as a source of nitrogen and carbon. The polypeptide is D-aspartate oxidase (Vanrija humicola (Yeast)).